Here is a 128-residue protein sequence, read N- to C-terminus: Small ribosomal subunit protein uS8c (128 aa).

It belongs to the universal ribosomal protein uS8 family. Part of the 30S ribosomal subunit.

The protein localises to the plastid. Its subcellular location is the chloroplast. One of the primary rRNA binding proteins, it binds directly to 16S rRNA central domain where it helps coordinate assembly of the platform of the 30S subunit. The polypeptide is Small ribosomal subunit protein uS8c (rps8) (Welwitschia mirabilis (Tree tumbo)).